A 153-amino-acid chain; its full sequence is MNIFEGKLIAEGLKVGIIVGRFNEFIGSKLLDGALDGFKRHGVNVEDIDVAWVPGAFEMPLIAKKMAKSPKYDAVICLGAVIKGSTSHYDYVCSEVSKGIANVSLETGKPVMFGVLTTNNIEQAIERAGTKAGNKGYECAVGAIEMANLIKEL.

5-amino-6-(D-ribitylamino)uracil contacts are provided by residues phenylalanine 22, 56–58 (AFE), and 80–82 (AVI). 85–86 (ST) is a binding site for (2S)-2-hydroxy-3-oxobutyl phosphate. Histidine 88 functions as the Proton donor in the catalytic mechanism. Phenylalanine 113 contacts 5-amino-6-(D-ribitylamino)uracil. Residue arginine 127 coordinates (2S)-2-hydroxy-3-oxobutyl phosphate.

Belongs to the DMRL synthase family.

It carries out the reaction (2S)-2-hydroxy-3-oxobutyl phosphate + 5-amino-6-(D-ribitylamino)uracil = 6,7-dimethyl-8-(1-D-ribityl)lumazine + phosphate + 2 H2O + H(+). Its pathway is cofactor biosynthesis; riboflavin biosynthesis; riboflavin from 2-hydroxy-3-oxobutyl phosphate and 5-amino-6-(D-ribitylamino)uracil: step 1/2. Catalyzes the formation of 6,7-dimethyl-8-ribityllumazine by condensation of 5-amino-6-(D-ribitylamino)uracil with 3,4-dihydroxy-2-butanone 4-phosphate. This is the penultimate step in the biosynthesis of riboflavin. The polypeptide is 6,7-dimethyl-8-ribityllumazine synthase (Clostridium botulinum (strain Eklund 17B / Type B)).